Here is a 373-residue protein sequence, read N- to C-terminus: P2Y purinoceptor 1 (373 aa).

Residues 1 to 51 (MTEVLWPAVPNGTDAAFLAGPGSSWGNSTVASTAAVSSSFKCALTKTGFQF) lie on the Extracellular side of the membrane. N-linked (GlcNAc...) asparagine glycans are attached at residues Asn11 and Asn27. Intrachain disulfides connect Cys42/Cys296 and Cys124/Cys202. An ADP-binding site is contributed by Lys46. The chain crosses the membrane as a helical span at residues 52–74 (YYLPAVYILVFIIGFLGNSVAIW). Residues 75–87 (MFVFHMKPWSGIS) are Cytoplasmic-facing. Residues 88–109 (VYMFNLALADFLYVLTLPALIF) traverse the membrane as a helical segment. At 110–125 (YYFNKTDWIFGDAMCK) the chain is on the extracellular side. N-linked (GlcNAc...) asparagine glycosylation is present at Asn113. Residues 126–147 (LQRFIFHVNLYGSILFLTCISA) form a helical membrane-spanning segment. At 148-166 (HRYSGVVYPLKSLGRLKKK) the chain is on the cytoplasmic side. The chain crosses the membrane as a helical span at residues 167–188 (NAICISVLVWLIVVVAISPILF). The Extracellular portion of the chain corresponds to 189 to 214 (YSGTGVRKNKTITCYDTTSDEYLRSY). N-linked (GlcNAc...) asparagine glycosylation is present at Asn197. 203-205 (YDT) contacts ADP. A helical transmembrane segment spans residues 215–237 (FIYSMCTTVAMFCVPLVLILGCY). At 238 to 260 (GLIVRALIYKDLDNSPLRRKSIY) the chain is on the cytoplasmic side. Residues 261–284 (LVIIVLTVFAVSYIPFHVMKTMNL) traverse the membrane as a helical segment. ADP contacts are provided by residues 283–287 (NLRAR), 303–306 (YATY), and Arg310. Residues 285 to 303 (RARLDFQTPAMCAFNDRVY) lie on the Extracellular side of the membrane. Residues 304 to 325 (ATYQVTRGLASLNSCVDPILYF) form a helical membrane-spanning segment. At 326-373 (LAGDTFRRRLSRATRKASRRSEANLQSKSEDMTLNILPEFKQNGDTSL) the chain is on the cytoplasmic side.

It belongs to the G-protein coupled receptor 1 family.

It localises to the cell membrane. ATP functions as antagonist and inhibits ADP-induced mobilization of Ca(2+). The P2Y1 receptor-specific antagonists A3P5PS, A3P5P and A2P5P inhibit downstream signaling mediated by mobilization of Ca(2+) from intracellular stores, and platelet shape changes in response to extracellular ADP. In terms of biological role, receptor for extracellular adenine nucleotides such as ADP. In platelets, binding to ADP leads to mobilization of intracellular calcium ions via activation of phospholipase C, a change in platelet shape, and ultimately platelet aggregation. This Homo sapiens (Human) protein is P2Y purinoceptor 1 (P2RY1).